Reading from the N-terminus, the 497-residue chain is Lysine--tRNA ligase (497 aa).

Mg(2+) contacts are provided by Glu-409 and Glu-416.

Belongs to the class-II aminoacyl-tRNA synthetase family. Homodimer. Mg(2+) is required as a cofactor.

It localises to the cytoplasm. It catalyses the reaction tRNA(Lys) + L-lysine + ATP = L-lysyl-tRNA(Lys) + AMP + diphosphate. The chain is Lysine--tRNA ligase from Streptococcus pyogenes serotype M49 (strain NZ131).